Reading from the N-terminus, the 185-residue chain is 3-hydroxyanthranilate 3,4-dioxygenase (185 aa).

Arg44 provides a ligand contact to O2. Fe cation-binding residues include His48, Glu54, and His95. Glu54 is a binding site for substrate. Residues Arg99 and Glu109 each contribute to the substrate site. A divalent metal cation-binding residues include Cys124, Cys127, Cys161, and Cys164.

This sequence belongs to the 3-HAO family. It depends on Fe(2+) as a cofactor.

It localises to the cytoplasm. The catalysed reaction is 3-hydroxyanthranilate + O2 = (2Z,4Z)-2-amino-3-carboxymuconate 6-semialdehyde. It participates in cofactor biosynthesis; NAD(+) biosynthesis; quinolinate from L-kynurenine: step 3/3. In terms of biological role, catalyzes the oxidative ring opening of 3-hydroxyanthranilate to 2-amino-3-carboxymuconate semialdehyde, which spontaneously cyclizes to quinolinate. This Podospora anserina (strain S / ATCC MYA-4624 / DSM 980 / FGSC 10383) (Pleurage anserina) protein is 3-hydroxyanthranilate 3,4-dioxygenase.